The following is a 61-amino-acid chain: MAKKSQIAKQKRGAKFNVQNYTRCERCGRPHSVYRKFHLCRICLRDLAHKGQIPGMKKASW.

The Zn(2+) site is built by Cys-24, Cys-27, Cys-40, and Cys-43.

Belongs to the universal ribosomal protein uS14 family. Zinc-binding uS14 subfamily. Part of the 30S ribosomal subunit. Contacts proteins S3 and S10. Requires Zn(2+) as cofactor.

Binds 16S rRNA, required for the assembly of 30S particles and may also be responsible for determining the conformation of the 16S rRNA at the A site. The protein is Small ribosomal subunit protein uS14B of Lactiplantibacillus plantarum (strain ATCC BAA-793 / NCIMB 8826 / WCFS1) (Lactobacillus plantarum).